We begin with the raw amino-acid sequence, 1169 residues long: ATP-dependent helicase/deoxyribonuclease subunit B (1169 aa).

Residues 1–296 form the UvrD-like helicase ATP-binding domain; it reads MTLRIVSGRS…QHVEANFANM (296 aa). Residue 8–15 participates in ATP binding; that stretch reads GRSGTGKS. The UvrD-like helicase C-terminal domain occupies 276 to 582; it reads YYTQRFQSED…EFSRIPPTLD (307 aa). Cysteine 804, cysteine 1129, cysteine 1132, and cysteine 1138 together coordinate [4Fe-4S] cluster.

This sequence belongs to the helicase family. AddB/RexB type 1 subfamily. As to quaternary structure, heterodimer of AddA and AddB. The cofactor is Mg(2+). [4Fe-4S] cluster is required as a cofactor.

Its function is as follows. The heterodimer acts as both an ATP-dependent DNA helicase and an ATP-dependent, dual-direction single-stranded exonuclease. Recognizes the chi site generating a DNA molecule suitable for the initiation of homologous recombination. The AddB subunit has 5' -&gt; 3' nuclease activity but not helicase activity. The protein is ATP-dependent helicase/deoxyribonuclease subunit B of Lysinibacillus sphaericus (strain C3-41).